Consider the following 138-residue polypeptide: Probable histone H2AXb (138 aa).

Positions 1-10 are enriched in gly residues; sequence MSSAGGGGGR. A disordered region spans residues 1–24; it reads MSSAGGGGGRGKSKGSKSVSRSSK. S135 carries the post-translational modification Phosphoserine; by ATM and ATR. The [ST]-Q motif signature appears at 135-136; sequence SQ.

This sequence belongs to the histone H2A family. The nucleosome is a histone octamer containing two molecules each of H2A, H2B, H3 and H4 assembled in one H3-H4 heterotetramer and two H2A-H2B heterodimers. The octamer wraps approximately 147 bp of DNA. Interacts with numerous proteins required for DNA damage signaling and repair when phosphorylated on Ser-135. In terms of processing, phosphorylated to form H2AXS139ph (gamma-H2AX) in response to DNA double strand breaks (DSBs) generated by exogenous genotoxic agents and by stalled replication forks, and may also occur during meiotic recombination events. Phosphorylation can extend up to several thousand nucleosomes from the actual site of the DSB and may mark the surrounding chromatin for recruitment of proteins required for DNA damage signaling and repair. Widespread phosphorylation may also serve to amplify the damage signal or aid repair of persistent lesions. H2AXS139ph in response to ionizing radiation is mediated by ATM while defects in DNA replication induce H2AXS139ph subsequent to activation of ATR. Dephosphorylation of H2AXS139ph by PP2A is required for DNA DSB repair.

Its subcellular location is the nucleus. The protein resides in the chromosome. In terms of biological role, variant histone H2A which replaces conventional H2A in a subset of nucleosomes. Nucleosomes wrap and compact DNA into chromatin, limiting DNA accessibility to the cellular machineries which require DNA as a template. Histones thereby play a central role in transcription regulation, DNA repair, DNA replication and chromosomal stability. DNA accessibility is regulated via a complex set of post-translational modifications of histones, also called histone code, and nucleosome remodeling. Required for checkpoint-mediated arrest of cell cycle progression in response to low doses of ionizing radiation and for efficient repair of DNA double strand breaks (DSBs) specifically when modified by C-terminal phosphorylation. In Oryza sativa subsp. indica (Rice), this protein is Probable histone H2AXb.